The primary structure comprises 377 residues: Probable purine permease 22 (377 aa).

The next 10 helical transmembrane spans lie at 39 to 59, 71 to 91, 107 to 127, 128 to 148, 166 to 186, 202 to 222, 238 to 258, 283 to 303, 309 to 329, and 338 to 358; these read WLRVSIYAIFVIFCQPLATVL, TYVVTLLQLIGFPVLILFRFF, SPSFTTLASVYLCTGLLVSAY, AYLSAVGLLYLPVSTFSLILA, FTPLIVNSLFLLTVSSALLVV, VIGFICTIGASAGIGLVLSLI, VLDLANYQSLVATCVVLIGLF, TLASAAIFWQVYTVGCVGLIF, FSNSITAVGLPIVPVVAVIVF, and IFSIILAIWGFLSFVYQHYLD.

It belongs to the purine permeases (TC 2.A.7.14) family.

It is found in the membrane. In Arabidopsis thaliana (Mouse-ear cress), this protein is Probable purine permease 22 (PUP22).